The sequence spans 490 residues: Bifunctional protein HldE (490 aa).

The segment at 1–330 is ribokinase; that stretch reads MLDFEAVLPA…RKVLPPASLA (330 aa). 205 to 208 lines the ATP pocket; that stretch reads NRKE. Residue aspartate 275 is part of the active site. The tract at residues 358-490 is cytidylyltransferase; sequence FTNGCFDILH…LVARAQNGKA (133 aa).

In the N-terminal section; belongs to the carbohydrate kinase PfkB family. The protein in the C-terminal section; belongs to the cytidylyltransferase family. In terms of assembly, homodimer.

It carries out the reaction D-glycero-beta-D-manno-heptose 7-phosphate + ATP = D-glycero-beta-D-manno-heptose 1,7-bisphosphate + ADP + H(+). The catalysed reaction is D-glycero-beta-D-manno-heptose 1-phosphate + ATP + H(+) = ADP-D-glycero-beta-D-manno-heptose + diphosphate. The protein operates within nucleotide-sugar biosynthesis; ADP-L-glycero-beta-D-manno-heptose biosynthesis; ADP-L-glycero-beta-D-manno-heptose from D-glycero-beta-D-manno-heptose 7-phosphate: step 1/4. It participates in nucleotide-sugar biosynthesis; ADP-L-glycero-beta-D-manno-heptose biosynthesis; ADP-L-glycero-beta-D-manno-heptose from D-glycero-beta-D-manno-heptose 7-phosphate: step 3/4. Functionally, catalyzes the phosphorylation of D-glycero-D-manno-heptose 7-phosphate at the C-1 position to selectively form D-glycero-beta-D-manno-heptose-1,7-bisphosphate. In terms of biological role, catalyzes the ADP transfer from ATP to D-glycero-beta-D-manno-heptose 1-phosphate, yielding ADP-D-glycero-beta-D-manno-heptose. In Rhodopseudomonas palustris (strain BisB18), this protein is Bifunctional protein HldE.